A 409-amino-acid chain; its full sequence is G2/mitotic-specific cyclin-B (409 aa).

It belongs to the cyclin family. Cyclin AB subfamily. In terms of assembly, interacts with the CDK1 protein kinase to form a serine/threonine kinase holoenzyme complex also known as maturation promoting factor (MPF). The cyclin subunit imparts substrate specificity to the complex.

Its function is as follows. Essential for the control of the cell cycle at the G2/M (mitosis) transition. The protein is G2/mitotic-specific cyclin-B of Arbacia punctulata (Punctuate sea urchin).